The sequence spans 495 residues: MAESQLSCLDEAHVNERVTEAHAAFYYCERRRAALEALLGGGEQAYRELVKKERLRDFLSSQERQALCAAWSPYEEAVSSTRAKAKAKAKFPAQPTESLAYWPDRSDTEVPPLDLGWTDTNFYRGVSRVTLFTHPPKEEKAPHLKQVVRQMIQQAQKVIAVVMDLFTDGDIFQDIVDAACKRRVPVYIILDEGGVKYFLEMCQGLELADFRIRNIRVRSVTGIGFYMPMGKIKGTLSSKFLMVDGDKVATGSFSFTWSSSYVDRNLLLLLTGQNMEPFDIEFRELYAISEEVNLHQHLGLAGRIGLNYSSTVARKLINPKYALVAGTRRPPGEMMRWAARQQREAGGNVEGQEEGSGGGESARRLESFLNDLVTVEQILPTVEPISPRLQRPTNGRPVSHAHTDAKHRSREALPQNGKGEAANGEATPAKEGKRFSSRLFSRRVKRPAVPSSMASSPSTETFADVEFPLGKRHNEGSNANISGKGITKASNCVIS.

Alanine 2 bears the N-acetylalanine mark. The tract at residues 2 to 294 (AESQLSCLDE…LYAISEEVNL (293 aa)) is DUF1669. Serine 4 carries the post-translational modification Phosphoserine. Disordered regions lie at residues 341–362 (QQRE…GESA) and 384–495 (PISP…CVIS). A compositionally biased stretch (low complexity) spans 447-458 (PAVPSSMASSPS). Serine 477 bears the Phosphoserine mark.

This sequence belongs to the FAM83 family. As to quaternary structure, directly interacts (via DUF1669) with CSNK1A1 and CSNK1A1L.

It localises to the cell membrane. The sequence is that of Protein FAM83F (Fam83f) from Mus musculus (Mouse).